We begin with the raw amino-acid sequence, 473 residues long: Ornithine decarboxylase (473 aa).

Residue Lys-106 is modified to N6-(pyridoxal phosphate)lysine. Residues Ser-240, Gly-277, and 313–316 (EPGR) each bind pyridoxal 5'-phosphate. 367–368 (FD) contributes to the substrate binding site. The Proton donor; shared with dimeric partner role is filled by Cys-417. Asp-418 lines the substrate pocket. Tyr-447 contacts pyridoxal 5'-phosphate.

The protein belongs to the Orn/Lys/Arg decarboxylase class-II family. As to quaternary structure, homodimer. Only the dimer is catalytically active, as the active sites are constructed of residues from both monomers. It depends on pyridoxal 5'-phosphate as a cofactor.

The protein localises to the cytoplasm. The enzyme catalyses L-ornithine + H(+) = putrescine + CO2. It functions in the pathway amine and polyamine biosynthesis; putrescine biosynthesis via L-ornithine pathway; putrescine from L-ornithine: step 1/1. Its activity is regulated as follows. Inhibited by antizyme (AZ) OAZ1 in response to polyamine levels. AZ inhibits the assembly of the functional homodimer by binding to ODC monomers and targeting them for ubiquitin-independent proteolytic destruction by the 26S proteasome. Functionally, catalyzes the first and rate-limiting step of polyamine biosynthesis that converts ornithine into putrescine, which is the precursor for the polyamines, spermidine and spermine. Polyamines are essential for cell proliferation and are implicated in cellular processes, ranging from DNA replication to apoptosis. In Candida albicans (strain SC5314 / ATCC MYA-2876) (Yeast), this protein is Ornithine decarboxylase (SPE1).